A 271-amino-acid chain; its full sequence is MQLFPVILPTLCVFLHLLISGSGSTPPLTHSNQQVAATRWLPATATWYGSAEGDGSSGGACGYGSLVDVKPFKARVGAVSPILFKGGEGCGACYKVRCLDKTICSKRAVTIIATDQSPSGPSAKAKHTHFDLSGAAFGHMAIPGHNGVIRNRGLLNILYRRTACKYRGKNIAFHVNAGSTDYWLSLLIEYEDGEGDIGSMHIRQAGSKEWISMKHIWGANWCIVEGPLKGPFSVKLTTLSNNKTLSATDVIPSNWVPKATYTSRLNFSPVL.

A signal peptide spans 1 to 24 (MQLFPVILPTLCVFLHLLISGSGS). Residues 58–169 (GGACGYGSLV…RRTACKYRGK (112 aa)) form the Expansin-like EG45 domain. Intrachain disulfides connect Cys61/Cys90, Cys93/Cys164, and Cys98/Cys104. The Expansin-like CBD domain maps to 182–263 (YWLSLLIEYE…NWVPKATYTS (82 aa)). Asn242 carries an N-linked (GlcNAc...) asparagine glycan.

The protein belongs to the expansin family. Expansin B subfamily.

It is found in the secreted. The protein localises to the cell wall. The protein resides in the membrane. Functionally, may cause loosening and extension of plant cell walls by disrupting non-covalent bonding between cellulose microfibrils and matrix glucans. No enzymatic activity has been found. The protein is Expansin-B1 (EXPB1) of Arabidopsis thaliana (Mouse-ear cress).